Reading from the N-terminus, the 508-residue chain is Lysine-specific permease LysP (508 aa).

The next 12 helical transmembrane spans lie at 43-63 (SMIA…GDVI), 66-86 (AGPF…YFLM), 112-132 (PAFG…TVAV), 144-164 (WLPD…VFSI), 184-204 (ITVV…IMGG), 219-239 (FVGG…LLVA), 270-290 (IFWR…AIIP), 314-334 (VGFS…VVSA), 367-387 (IPFI…LTSI), 393-413 (FTLL…GIAI), 436-456 (AKLF…VTLG), and 467-487 (WVQG…YLGY).

It belongs to the amino acid-polyamine-organocation (APC) superfamily. Amino acid transporter (AAT) (TC 2.A.3.1) family.

It localises to the cell membrane. The catalysed reaction is L-lysine(out) + H(+)(out) = L-lysine(in) + H(+)(in). In terms of biological role, permease involved in lysine uptake. This Lactococcus lactis subsp. cremoris (strain MG1363) protein is Lysine-specific permease LysP.